The following is a 61-amino-acid chain: Disintegrin rubistatin (61 aa).

The Disintegrin domain maps to 1 to 61 (NPCCDAATCK…ADCPRNGLYG (61 aa)). 4 cysteine pairs are disulfide-bonded: Cys3–Cys26, Cys17–Cys23, Cys22–Cys47, and Cys35–Cys54. The short motif at 39–41 (MVD) is the Cell attachment site; atypical (MVD) element.

Belongs to the venom metalloproteinase (M12B) family. P-II subfamily. P-IIa sub-subfamily. Monomer. Expressed by the venom gland.

It localises to the secreted. Functionally, recombinant disintegrin rubistatin inhibits ADP-induced platelet aggregation. In addition, it strongly induces apoptosis, and inhibits cell migration and proliferation of the human cancer cell line SK-Mel-28. The protein is Disintegrin rubistatin of Crotalus ruber ruber (Red diamond rattlesnake).